Here is an 89-residue protein sequence, read N- to C-terminus: Large ribosomal subunit protein bL31B (89 aa).

This sequence belongs to the bacterial ribosomal protein bL31 family. Type B subfamily. As to quaternary structure, part of the 50S ribosomal subunit.

The protein is Large ribosomal subunit protein bL31B of Corynebacterium urealyticum (strain ATCC 43042 / DSM 7109).